The sequence spans 215 residues: Pyridoxine/pyridoxamine 5'-phosphate oxidase (215 aa).

Substrate-binding positions include 9-12 (RREY) and K69. FMN is bound by residues 64 to 69 (RILLLK), 79 to 80 (FT), K86, and Q108. Substrate contacts are provided by Y126, R130, and S134. Residues 143 to 144 (QS) and W188 each bind FMN. Substrate is bound at residue 194 to 196 (RLH). An FMN-binding site is contributed by R198.

This sequence belongs to the pyridoxamine 5'-phosphate oxidase family. In terms of assembly, homodimer. It depends on FMN as a cofactor.

It catalyses the reaction pyridoxamine 5'-phosphate + O2 + H2O = pyridoxal 5'-phosphate + H2O2 + NH4(+). The enzyme catalyses pyridoxine 5'-phosphate + O2 = pyridoxal 5'-phosphate + H2O2. Its pathway is cofactor metabolism; pyridoxal 5'-phosphate salvage; pyridoxal 5'-phosphate from pyridoxamine 5'-phosphate: step 1/1. The protein operates within cofactor metabolism; pyridoxal 5'-phosphate salvage; pyridoxal 5'-phosphate from pyridoxine 5'-phosphate: step 1/1. Catalyzes the oxidation of either pyridoxine 5'-phosphate (PNP) or pyridoxamine 5'-phosphate (PMP) into pyridoxal 5'-phosphate (PLP). The sequence is that of Pyridoxine/pyridoxamine 5'-phosphate oxidase from Pseudomonas paraeruginosa (strain DSM 24068 / PA7) (Pseudomonas aeruginosa (strain PA7)).